The chain runs to 448 residues: Methylenetetrahydrofolate--tRNA-(uracil-5-)-methyltransferase TrmFO (448 aa).

An FAD-binding site is contributed by 13-18 (GAGLAG).

The protein belongs to the MnmG family. TrmFO subfamily. The cofactor is FAD.

The protein resides in the cytoplasm. The enzyme catalyses uridine(54) in tRNA + (6R)-5,10-methylene-5,6,7,8-tetrahydrofolate + NADH + H(+) = 5-methyluridine(54) in tRNA + (6S)-5,6,7,8-tetrahydrofolate + NAD(+). It carries out the reaction uridine(54) in tRNA + (6R)-5,10-methylene-5,6,7,8-tetrahydrofolate + NADPH + H(+) = 5-methyluridine(54) in tRNA + (6S)-5,6,7,8-tetrahydrofolate + NADP(+). Functionally, catalyzes the folate-dependent formation of 5-methyl-uridine at position 54 (M-5-U54) in all tRNAs. This chain is Methylenetetrahydrofolate--tRNA-(uracil-5-)-methyltransferase TrmFO, found in Streptococcus pyogenes serotype M28 (strain MGAS6180).